The primary structure comprises 417 residues: 2-oxoglutarate and iron-dependent oxygenase JMJD4 (417 aa).

Positions 142–301 (CRDFPVEDVF…NMWRFLQQEL (160 aa)) constitute a JmjC domain. Fe cation is bound by residues histidine 189, aspartate 191, and histidine 269.

This sequence belongs to the JMJD6 family. As to quaternary structure, interacts with ETF1. Interacts with the ETF1-GSPT1 complex. Requires Fe(2+) as cofactor.

The protein resides in the cytoplasm. The catalysed reaction is L-lysyl-[protein] + 2-oxoglutarate + O2 = 4-hydroxy-L-lysyl-[protein] + succinate + CO2. Functionally, catalyzes the 2-oxoglutarate and iron-dependent C4-lysyl hydroxylation of ETF1 at 'Lys-63' thereby promoting the translational termination efficiency of ETF1. This Homo sapiens (Human) protein is 2-oxoglutarate and iron-dependent oxygenase JMJD4 (JMJD4).